The chain runs to 276 residues: Glutamate racemase (276 aa).

Substrate contacts are provided by residues 10 to 11 (DS) and 42 to 43 (YG). The active-site Proton donor/acceptor is C74. 75 to 76 (NT) is a binding site for substrate. C185 acts as the Proton donor/acceptor in catalysis. 186–187 (TH) contacts substrate.

The protein belongs to the aspartate/glutamate racemases family.

It catalyses the reaction L-glutamate = D-glutamate. Its pathway is cell wall biogenesis; peptidoglycan biosynthesis. Provides the (R)-glutamate required for cell wall biosynthesis. In Levilactobacillus brevis (strain ATCC 367 / BCRC 12310 / CIP 105137 / JCM 1170 / LMG 11437 / NCIMB 947 / NCTC 947) (Lactobacillus brevis), this protein is Glutamate racemase.